We begin with the raw amino-acid sequence, 707 residues long: Lipase maturation factor 2 (707 aa).

A run of 9 helical transmembrane segments spans residues 11–31 (FLWG…AQIP), 78–98 (MEMI…FSFL), 102–122 (LVFL…QVFL), 126–146 (WDSL…VHAL), 220–240 (FSVV…FLPF), 256–276 (ILII…VLCC), 306–326 (LYSL…FWTV), 358–378 (ITFP…LKGM), and 398–418 (VIFS…YTYI). The N-linked (GlcNAc...) asparagine glycan is linked to Asn-483. The chain crosses the membrane as a helical span at residues 634 to 654 (LLLHSFIFGIFTIYFLQAMFG). A disordered region spans residues 659–707 (PGVAKQRHSKPPNEKKKQKSNSGQGESAAAKSSGHGADTVRRNKKNEKS). Residues 696–707 (DTVRRNKKNEKS) are compositionally biased toward basic and acidic residues.

The protein belongs to the lipase maturation factor family.

The protein resides in the endoplasmic reticulum membrane. Involved in the maturation of specific proteins in the endoplasmic reticulum. The protein is Lipase maturation factor 2 (lmf2) of Xenopus tropicalis (Western clawed frog).